Consider the following 124-residue polypeptide: NADH dehydrogenase [ubiquinone] iron-sulfur protein 6, mitochondrial (124 aa).

Residues 1–28 (MAAAMTFCRLLNRCGEAARSLPLGARCF) constitute a mitochondrion transit peptide. At Lys-98 the chain carries N6-acetyllysine.

It belongs to the complex I NDUFS6 subunit family. Mammalian complex I is composed of 45 different subunits. This is a component of the iron-sulfur (IP) fragment of the enzyme.

It is found in the mitochondrion inner membrane. Accessory subunit of the mitochondrial membrane respiratory chain NADH dehydrogenase (Complex I), that is believed not to be involved in catalysis. Complex I functions in the transfer of electrons from NADH to the respiratory chain. The immediate electron acceptor for the enzyme is believed to be ubiquinone. In Homo sapiens (Human), this protein is NADH dehydrogenase [ubiquinone] iron-sulfur protein 6, mitochondrial (NDUFS6).